The sequence spans 510 residues: ATP synthase subunit alpha (510 aa).

169–176 provides a ligand contact to ATP; the sequence is GDRQTGKT.

Belongs to the ATPase alpha/beta chains family. As to quaternary structure, F-type ATPases have 2 components, CF(1) - the catalytic core - and CF(0) - the membrane proton channel. CF(1) has five subunits: alpha(3), beta(3), gamma(1), delta(1), epsilon(1). CF(0) has four main subunits: a(1), b(1), b'(1) and c(9-12).

It is found in the cell inner membrane. The catalysed reaction is ATP + H2O + 4 H(+)(in) = ADP + phosphate + 5 H(+)(out). Functionally, produces ATP from ADP in the presence of a proton gradient across the membrane. The alpha chain is a regulatory subunit. The polypeptide is ATP synthase subunit alpha (Rhodopseudomonas palustris (strain ATCC BAA-98 / CGA009)).